The primary structure comprises 501 residues: Lysine--tRNA ligase (501 aa).

Mg(2+) contacts are provided by glutamate 410 and glutamate 417.

It belongs to the class-II aminoacyl-tRNA synthetase family. In terms of assembly, homodimer. The cofactor is Mg(2+).

The protein localises to the cytoplasm. The catalysed reaction is tRNA(Lys) + L-lysine + ATP = L-lysyl-tRNA(Lys) + AMP + diphosphate. This is Lysine--tRNA ligase from Shewanella pealeana (strain ATCC 700345 / ANG-SQ1).